Consider the following 406-residue polypeptide: Probable 2,3-bisphosphoglycerate-independent phosphoglycerate mutase (406 aa).

The protein belongs to the BPG-independent phosphoglycerate mutase family. A-PGAM subfamily.

It carries out the reaction (2R)-2-phosphoglycerate = (2R)-3-phosphoglycerate. The protein operates within carbohydrate degradation; glycolysis; pyruvate from D-glyceraldehyde 3-phosphate: step 3/5. Its function is as follows. Catalyzes the interconversion of 2-phosphoglycerate and 3-phosphoglycerate. The sequence is that of Probable 2,3-bisphosphoglycerate-independent phosphoglycerate mutase from Thermus thermophilus (strain ATCC 27634 / DSM 579 / HB8).